Here is a 257-residue protein sequence, read N- to C-terminus: Phosphonates import ATP-binding protein PhnC (257 aa).

An ABC transporter domain is found at 4-248 (IEFKDVNKVY…VFNDIYGRKL (245 aa)). 37–44 (GLSGAGKS) provides a ligand contact to ATP.

It belongs to the ABC transporter superfamily. Phosphonates importer (TC 3.A.1.9.1) family. In terms of assembly, the complex is composed of two ATP-binding proteins (PhnC), two transmembrane proteins (PhnE) and a solute-binding protein (PhnD).

The protein resides in the cell membrane. It carries out the reaction phosphonate(out) + ATP + H2O = phosphonate(in) + ADP + phosphate + H(+). Functionally, part of the ABC transporter complex PhnCDE involved in phosphonates import. Responsible for energy coupling to the transport system. This Staphylococcus haemolyticus (strain JCSC1435) protein is Phosphonates import ATP-binding protein PhnC.